A 561-amino-acid polypeptide reads, in one-letter code: Zinc finger protein 394 (561 aa).

Serine 12 carries the post-translational modification Phosphoserine. Lysine 40 participates in a covalent cross-link: Glycyl lysine isopeptide (Lys-Gly) (interchain with G-Cter in SUMO2). The disordered stretch occupies residues 43-62 (EDSLGSWEPSYPAASPDPET). An SCAN box domain is found at 64 to 146 (RLHFRQLRYQ…AVVRALQRAL (83 aa)). Positions 155-230 (VTFEDMAVSL…LQEAFQGKRP (76 aa)) constitute a KRAB domain. Glycyl lysine isopeptide (Lys-Gly) (interchain with G-Cter in SUMO2) cross-links involve residues lysine 203 and lysine 228. The span at 238 to 247 (THEDRVEKQS) shows a compositional bias: basic and acidic residues. The interval 238–283 (THEDRVEKQSGDPLPLKLENSPEAEGFNSISDVNKNGSIEGEDSKN) is disordered. Lysine 254 is covalently cross-linked (Glycyl lysine isopeptide (Lys-Gly) (interchain with G-Cter in SUMO2)). Residues 265–274 (NSISDVNKNG) show a composition bias toward polar residues. Lysine 282 is covalently cross-linked (Glycyl lysine isopeptide (Lys-Gly) (interchain with G-Cter in SUMO2)). C2H2-type zinc fingers lie at residues 358–380 (YKCG…QRIH), 386–408 (YGCQ…QRTH), 414–436 (YTCL…QSTH), 442–463 (FKCE…QRLH), 469–491 (YKCE…HRIH), 497–519 (YGCS…QRIH), and 525–547 (YKCL…QRIH). Lysine 443 is covalently cross-linked (Glycyl lysine isopeptide (Lys-Gly) (interchain with G-Cter in SUMO2)).

It belongs to the krueppel C2H2-type zinc-finger protein family.

The protein resides in the nucleus. May be involved in transcriptional regulation. In Pan paniscus (Pygmy chimpanzee), this protein is Zinc finger protein 394 (ZNF394).